A 413-amino-acid chain; its full sequence is Aminopeptidase PepS (413 aa).

6 residues coordinate a divalent metal cation: Glu253, Glu319, Glu343, His348, His381, and Asp383.

The protein belongs to the peptidase M29 family. As to quaternary structure, monomer. It depends on Co(2+) as a cofactor. Zn(2+) is required as a cofactor. The cofactor is Mg(2+).

Exhibits a high specificity towards peptides possessing arginine or aromatic amino acids at the N-terminus. Could be involved both in bacterial growth by supplying amino acids. This chain is Aminopeptidase PepS (pepS), found in Streptococcus thermophilus.